The chain runs to 536 residues: Phosphoenolpyruvate carboxykinase (ATP) (536 aa).

Substrate is bound by residues Arg61, Tyr195, and Lys201. Residues Lys201, His220, and 236–244 (GLSGTGKTT) each bind ATP. Lys201 and His220 together coordinate Mn(2+). Asp257 contacts Mn(2+). ATP-binding residues include Glu285, Arg322, and Thr447. A substrate-binding site is contributed by Arg322.

Belongs to the phosphoenolpyruvate carboxykinase (ATP) family. Mn(2+) is required as a cofactor.

The protein resides in the cytoplasm. The enzyme catalyses oxaloacetate + ATP = phosphoenolpyruvate + ADP + CO2. It functions in the pathway carbohydrate biosynthesis; gluconeogenesis. Its function is as follows. Involved in the gluconeogenesis. Catalyzes the conversion of oxaloacetate (OAA) to phosphoenolpyruvate (PEP) through direct phosphoryl transfer between the nucleoside triphosphate and OAA. This Chelativorans sp. (strain BNC1) protein is Phosphoenolpyruvate carboxykinase (ATP).